The chain runs to 223 residues: Killer cell lectin-like receptor subfamily B member 1B allele B (223 aa).

Residues 1–43 (MDSTTLVYADLNLARIQEPKHDSPPSLSPDTCRCPRWHRLALK) are Cytoplasmic-facing. Residues 6–11 (LVYADL) carry the ITIM motif motif. An LCK-binding motif motif is present at residues 32–35 (CRCP). Residues 44–64 (FGCAGLILLVLVVIGLCVLVL) traverse the membrane as a helical; Signal-anchor for type II membrane protein segment. Over 65-223 (SVQKSSVQKI…LNHETPCNDS (159 aa)) the chain is Extracellular. The C-type lectin domain maps to 101–211 (HRDKCFHVSQ…CSSDNRWICQ (111 aa)). Cystine bridges form between Cys122–Cys210 and Cys189–Cys202.

Homodimer; disulfide-linked. Interacts with tyrosine kinase LCK. Binds PTPN6/SHP-1 in a phosphorylation-dependent manner. As to expression, expressed in NK cells and a subset of T-cells.

It is found in the membrane. In terms of biological role, receptor for CLEC2D/OCIL. Ligand-binding contributes to inhibition of cytotoxic natural killer (NK) cells. May mediate MHC class I-independent 'missing-self' recognition of allografts, tumor cells and virus-infected cells. The sequence is that of Killer cell lectin-like receptor subfamily B member 1B allele B (Klrb1b) from Mus musculus (Mouse).